The following is a 338-amino-acid chain: Methionine import ATP-binding protein MetN 2 (338 aa).

Residues 2-242 (IEIEKVCVDF…PQHAFTQQLV (241 aa)) form the ABC transporter domain. 39-46 (GTSGAGKS) contributes to the ATP binding site.

This sequence belongs to the ABC transporter superfamily. Methionine importer (TC 3.A.1.24) family. As to quaternary structure, the complex is composed of two ATP-binding proteins (MetN), two transmembrane proteins (MetI) and a solute-binding protein (MetQ).

It localises to the cell inner membrane. The enzyme catalyses L-methionine(out) + ATP + H2O = L-methionine(in) + ADP + phosphate + H(+). It catalyses the reaction D-methionine(out) + ATP + H2O = D-methionine(in) + ADP + phosphate + H(+). In terms of biological role, part of the ABC transporter complex MetNIQ involved in methionine import. Responsible for energy coupling to the transport system. This Salmonella typhimurium (strain LT2 / SGSC1412 / ATCC 700720) protein is Methionine import ATP-binding protein MetN 2.